The following is a 565-amino-acid chain: Probable serine/threonine-protein kinase abkA (565 aa).

Positions 44–77 (NNNNISLKDKFKDLKDLKDNLNEKKINNDNDDDD) form a coiled coil. Positions 231 to 565 (LFQDDPIAAA…FKNIFYKNYK (335 aa)) constitute a Protein kinase domain. Residues 237-245 (IAAASIGQV) and Lys259 each bind ATP. Residue Asp401 is the Proton acceptor of the active site.

Belongs to the protein kinase superfamily. ADCK protein kinase family.

This chain is Probable serine/threonine-protein kinase abkA (abkA), found in Dictyostelium discoideum (Social amoeba).